The chain runs to 213 residues: Large ribosomal subunit protein uL1 (213 aa).

The protein belongs to the universal ribosomal protein uL1 family.

This Chlamydomonas reinhardtii (Chlamydomonas smithii) protein is Large ribosomal subunit protein uL1 (RPL10A).